The primary structure comprises 65 residues: Weak toxin CM-11 (65 aa).

Intrachain disulfides connect Cys-3/Cys-24, Cys-6/Cys-11, Cys-17/Cys-42, Cys-46/Cys-57, and Cys-58/Cys-63.

Belongs to the three-finger toxin family. Ancestral subfamily. Orphan group II sub-subfamily. In terms of tissue distribution, expressed by the venom gland.

The protein resides in the secreted. Binds with low affinity to muscular (alpha-1-beta-1-delta-epsilon/CHRNA1-CHRNB1-CHRND-CHRNE) and very low affinity to neuronal (alpha-7/CHRNA7) nicotinic acetylcholine receptor (nAChR). The polypeptide is Weak toxin CM-11 (Naja haje haje (Egyptian cobra)).